A 430-amino-acid chain; its full sequence is Asparagine--tRNA ligase (430 aa).

The protein belongs to the class-II aminoacyl-tRNA synthetase family. As to quaternary structure, homodimer.

The protein resides in the cytoplasm. It carries out the reaction tRNA(Asn) + L-asparagine + ATP = L-asparaginyl-tRNA(Asn) + AMP + diphosphate + H(+). The protein is Asparagine--tRNA ligase of Staphylococcus aureus (strain JH1).